Consider the following 376-residue polypeptide: UDP-N-acetylglucosamine--N-acetylmuramyl-(pentapeptide) pyrophosphoryl-undecaprenol N-acetylglucosamine transferase (376 aa).

Residues 14–16 (TGG), N128, R169, S201, I256, and Q301 contribute to the UDP-N-acetyl-alpha-D-glucosamine site.

This sequence belongs to the glycosyltransferase 28 family. MurG subfamily.

It localises to the cell inner membrane. It catalyses the reaction di-trans,octa-cis-undecaprenyl diphospho-N-acetyl-alpha-D-muramoyl-L-alanyl-D-glutamyl-meso-2,6-diaminopimeloyl-D-alanyl-D-alanine + UDP-N-acetyl-alpha-D-glucosamine = di-trans,octa-cis-undecaprenyl diphospho-[N-acetyl-alpha-D-glucosaminyl-(1-&gt;4)]-N-acetyl-alpha-D-muramoyl-L-alanyl-D-glutamyl-meso-2,6-diaminopimeloyl-D-alanyl-D-alanine + UDP + H(+). Its pathway is cell wall biogenesis; peptidoglycan biosynthesis. In terms of biological role, cell wall formation. Catalyzes the transfer of a GlcNAc subunit on undecaprenyl-pyrophosphoryl-MurNAc-pentapeptide (lipid intermediate I) to form undecaprenyl-pyrophosphoryl-MurNAc-(pentapeptide)GlcNAc (lipid intermediate II). This is UDP-N-acetylglucosamine--N-acetylmuramyl-(pentapeptide) pyrophosphoryl-undecaprenol N-acetylglucosamine transferase from Phocaeicola vulgatus (strain ATCC 8482 / DSM 1447 / JCM 5826 / CCUG 4940 / NBRC 14291 / NCTC 11154) (Bacteroides vulgatus).